The sequence spans 342 residues: tRNA N6-adenosine threonylcarbamoyltransferase (342 aa).

Residues histidine 120 and histidine 124 each coordinate Fe cation. Substrate is bound by residues 142-146, aspartate 175, glycine 188, aspartate 192, and asparagine 281; that span reads VVSGG. A Fe cation-binding site is contributed by aspartate 310.

Belongs to the KAE1 / TsaD family. Fe(2+) is required as a cofactor.

Its subcellular location is the cytoplasm. It carries out the reaction L-threonylcarbamoyladenylate + adenosine(37) in tRNA = N(6)-L-threonylcarbamoyladenosine(37) in tRNA + AMP + H(+). In terms of biological role, required for the formation of a threonylcarbamoyl group on adenosine at position 37 (t(6)A37) in tRNAs that read codons beginning with adenine. Is involved in the transfer of the threonylcarbamoyl moiety of threonylcarbamoyl-AMP (TC-AMP) to the N6 group of A37, together with TsaE and TsaB. TsaD likely plays a direct catalytic role in this reaction. This chain is tRNA N6-adenosine threonylcarbamoyltransferase, found in Geobacillus thermodenitrificans (strain NG80-2).